The following is a 104-amino-acid chain: Large ribosomal subunit protein uL24 (104 aa).

The protein belongs to the universal ribosomal protein uL24 family. In terms of assembly, part of the 50S ribosomal subunit.

One of two assembly initiator proteins, it binds directly to the 5'-end of the 23S rRNA, where it nucleates assembly of the 50S subunit. Functionally, one of the proteins that surrounds the polypeptide exit tunnel on the outside of the subunit. This is Large ribosomal subunit protein uL24 from Buchnera aphidicola subsp. Baizongia pistaciae (strain Bp).